The following is a 429-amino-acid chain: Probable alcohol acetyltransferase orf1 (429 aa).

It belongs to the alcohol acetyltransferase FCK4 family.

Its pathway is secondary metabolite biosynthesis. Functionally, probable alcohol acetyltransferase; part of the gene cluster that mediates the biosynthesis of the glycolipid biosurfactant ustilagic acid (UA). UA is a secreted cellobiose glycolipid that is toxic for many microorganisms and confers biocontrol activity to U.maydis. UA consists of 15,16-dihydroxypalmitic or 2,15,16-trihydroxypalmitic acid, which is O-glycosidically linked to cellobiose at its terminal hydroxyl group. In addition, the cellobiose moiety is acetylated and acylated with a short-chain hydroxy fatty acid. UA biosynthesis starts with omega-hydroxylation of palmitic acid catalyzed by the cytochrome P450 monooxygenase cyp1. Terminal hydroxylation of palmitic acid precedes subterminal hydroxylation catalyzed by the cytochrome P450 monooxygenase cyp2. Sequential glucosylation of the hydroxy fatty acid is probably catalyzed by the glycosyltransferase ugt1. The cellobiose lipid is further decorated by acetylation of the proximal glucose residue and by acylation with a short-chain beta-hydroxy fatty acid at the distal glucose residue. The acyltransferase uat1 may be a good candidate for catalyzing either acetylation or acylation of the cellobiose lipid. The fatty acid synthase fas2 may be involved in synthesis of the carbon backbone of the short-chain beta-hydroxy fatty acid esterified to the cellobiose disaccharide. The secreted UA consists of a mixture of both alpha-hydroxylated and non-hydroxylated glycolipids; therefore, alpha-hydroxylation of the long-chain fatty, catalyzed by the fatty acid hydroxylase ahd1, occurs late in UA biosynthesis and may be the last step before secretion. The polypeptide is Probable alcohol acetyltransferase orf1 (Mycosarcoma maydis (Corn smut fungus)).